We begin with the raw amino-acid sequence, 60 residues long: Large ribosomal subunit protein bL32 (60 aa).

Basic residues predominate over residues 1–23 (MAKHPVPKKKTSKSKRDMRRSHH). Residues 1–34 (MAKHPVPKKKTSKSKRDMRRSHHALTAPNLTECP) form a disordered region. Residues Cys33, Cys36, Cys46, and Cys49 each contribute to the Zn(2+) site. A C4-type zinc finger spans residues 33–49 (CPQCHGKKLSHHICPNC).

The protein belongs to the bacterial ribosomal protein bL32 family. As to quaternary structure, part of the 50S ribosomal subunit. Contacts proteins L17 and L22. Requires Zn(2+) as cofactor.

Forms a cluster with L17 and L22, and with L22, a pair of 'tweezers' that hold together all the domains of the 23S rRNA. Interacts with the antibiotic troleandomycin which blocks the peptide exit tunnel. In Deinococcus radiodurans (strain ATCC 13939 / DSM 20539 / JCM 16871 / CCUG 27074 / LMG 4051 / NBRC 15346 / NCIMB 9279 / VKM B-1422 / R1), this protein is Large ribosomal subunit protein bL32 (rpmF).